The following is a 203-amino-acid chain: ATP-dependent Clp protease proteolytic subunit 1 (203 aa).

Ser-98 serves as the catalytic Nucleophile. Residue His-123 is part of the active site.

Belongs to the peptidase S14 family. In terms of assembly, fourteen ClpP subunits assemble into 2 heptameric rings which stack back to back to give a disk-like structure with a central cavity, resembling the structure of eukaryotic proteasomes.

The protein localises to the cytoplasm. It carries out the reaction Hydrolysis of proteins to small peptides in the presence of ATP and magnesium. alpha-casein is the usual test substrate. In the absence of ATP, only oligopeptides shorter than five residues are hydrolyzed (such as succinyl-Leu-Tyr-|-NHMec, and Leu-Tyr-Leu-|-Tyr-Trp, in which cleavage of the -Tyr-|-Leu- and -Tyr-|-Trp bonds also occurs).. Its function is as follows. Cleaves peptides in various proteins in a process that requires ATP hydrolysis. Has a chymotrypsin-like activity. Plays a major role in the degradation of misfolded proteins. In Chlamydia felis (strain Fe/C-56) (Chlamydophila felis), this protein is ATP-dependent Clp protease proteolytic subunit 1.